Here is a 462-residue protein sequence, read N- to C-terminus: Acetate--CoA ligase [ADP-forming] I subunit alpha (462 aa).

The protein belongs to the acetate CoA ligase alpha subunit family. In terms of assembly, heterotetramer of two alpha and two beta subunits.

It is found in the cytoplasm. The enzyme catalyses acetate + ATP + CoA = acetyl-CoA + ADP + phosphate. Activity is dependent on magnesium. Catalyzes the reversible formation of acetate and ATP from acetyl-CoA by using ADP and phosphate. Can use other substrates such as isobutyryl-CoA, propionyl-CoA and butyryl-CoA, but not indoleacetyl-CoA, phenylacetyl-CoA or succinyl-CoA. Seems to be involved primarily in the conversion of acetyl-CoA to acetate. Participates in the degradation of branched-chain amino acids via branched-chain-acyl-CoA esters. The protein is Acetate--CoA ligase [ADP-forming] I subunit alpha of Pyrococcus furiosus (strain ATCC 43587 / DSM 3638 / JCM 8422 / Vc1).